We begin with the raw amino-acid sequence, 421 residues long: MSARAGIIVTGTEVLTGRVQDRNGPWIADRLLELGVELAHITICGDRPADIEAQLRFLAAEGVDLIVTSGGLGPTADDLTVATVARFCGRELILDTELEQRIADILRRLMGRRTDVDFDALRAANRKQAMVPDGATVLEPVGTAPGVVVPGSPTVLVLPGPPRELQPMWRTAVQTEALRSAIAGRTEYRQDMVRMFGLPESGLAETLRDAERDLAGFDRLEITTCLRRGELEIVTRYEPDAEPVYRNLLTLLRDRHGSAIFSEDGSLVDDQVAALLAGHTIATAESCTGGMLSARLTERAGSSAYVAGAAVCYADAAKVELLGVPADLIADHGAVSEPVAEAMADGALRRFGADVAVAITGIAGPGGGTELKPVGTVCFCVRRADGRVVTRTVRLPGDRSDVRERSTTVAMHLLRRALQDG.

The protein belongs to the CinA family.

The polypeptide is CinA-like protein (Mycobacterium sp. (strain JLS)).